The sequence spans 441 residues: Ubiquitin carboxyl-terminal hydrolase MINDY-3 (441 aa).

Cys51 serves as the catalytic Nucleophile. His284 (proton acceptor) is an active-site residue.

The protein belongs to the MINDY deubiquitinase family. FAM188 subfamily.

The protein localises to the nucleus. The enzyme catalyses Thiol-dependent hydrolysis of ester, thioester, amide, peptide and isopeptide bonds formed by the C-terminal Gly of ubiquitin (a 76-residue protein attached to proteins as an intracellular targeting signal).. Hydrolase that can remove 'Lys-48'-linked conjugated ubiquitin from proteins. The sequence is that of Ubiquitin carboxyl-terminal hydrolase MINDY-3 (mindy3) from Xenopus tropicalis (Western clawed frog).